Reading from the N-terminus, the 77-residue chain is MKTLFFLSVFIFLLLHLSPGKMEILLGSNGGARCDINKKSFDCYHRNGRCRFNCRKREYNNGDCSQYQSCCLPTRNL.

Positions 1–20 (MKTLFFLSVFIFLLLHLSPG) are cleaved as a signal peptide. Intrachain disulfides connect Cys-43-Cys-70, Cys-50-Cys-64, and Cys-54-Cys-71.

This sequence belongs to the beta-defensin family. In terms of tissue distribution, lowly expressed in spleen, kidney and lung.

It is found in the secreted. Functionally, has antimicrobial activity. In Ornithorhynchus anatinus (Duckbill platypus), this protein is Defensin-B6.